The chain runs to 145 residues: Glutaconyl-CoA decarboxylase subunit gamma (145 aa).

Residues 52 to 82 form a disordered region; sequence APAPAAAPAAAPAPAAKPAAAAPAGSVTVSA. Low complexity predominate over residues 57 to 75; that stretch reads AAPAAAPAPAAKPAAAAPA. The 69-residue stretch at 77–145 folds into the Biotinyl-binding domain; the sequence is SVTVSAPMPG…VATGDVMVIL (69 aa). N6-biotinyllysine is present on lysine 112.

As to quaternary structure, heterooctamer consisting of two alpha, two beta, two gamma and two delta subunits. Biotin serves as cofactor.

It carries out the reaction (2E)-glutaconyl-CoA + Na(+)(in) + H(+) = (2E)-butenoyl-CoA + Na(+)(out) + CO2. It participates in amino-acid degradation; L-glutamate degradation via hydroxyglutarate pathway; crotonoyl-CoA from L-glutamate: step 5/5. In terms of biological role, biotin carrier subunit of the primary sodium pump glutaconyl-CoA decarboxylase (GCD). The protein is Glutaconyl-CoA decarboxylase subunit gamma (gcdC) of Acidaminococcus fermentans (strain ATCC 25085 / DSM 20731 / CCUG 9996 / CIP 106432 / VR4).